Reading from the N-terminus, the 505-residue chain is Forkhead box protein O4 (505 aa).

Polar residues predominate over residues 1-10 (MDPGNENSAT). Disordered stretches follow at residues 1 to 100 (MDPG…RRNA) and 176 to 246 (SWWM…CSRN). Thr32 bears the Phosphothreonine; by PKB/AKT1 mark. A compositionally biased stretch (basic and acidic residues) spans 54-64 (LGEKVHTEGRS). A DNA-binding region (fork-head) is located at residues 100-188 (AWGNQSYAEL…MLNPEGGKSG (89 aa)). Ser197 is modified (phosphoserine; by PKB/AKT1). Residues 205 to 216 (LRGRSKAPKKKP) show a composition bias toward basic residues. Position 262 is a phosphoserine; by PKB/AKT1 (Ser262).

As to quaternary structure, interacts with CREBBP/CBP, CTNNB1, MYOCD, SIRT1, SRF and YWHAZ. Acetylated by CREBBP/CBP and deacetylated by SIRT1. Binding of YWHAZ inhibits DNA-binding. Interacts with USP7; the interaction is enhanced in presence of hydrogen peroxide and occurs independently of TP53. Interacts with NLK, and this inhibits monoubiquitination and transcriptional activity. Interacts with FOXK1; the interaction inhibits MEF2C transactivation activity. In terms of processing, acetylation by CREBBP/CBP, which is induced by peroxidase stress, inhibits transcriptional activity. Deacetylation by SIRT1 is NAD-dependent and stimulates transcriptional activity. Phosphorylation by PKB/AKT1 inhibits transcriptional activity and is responsible for cytoplasmic localization. May be phosphorylated at multiple sites by NLK. Post-translationally, monoubiquitinated; monoubiquitination is induced by oxidative stress and reduced by deacetylase inhibitors; results in its relocalization to the nucleus and its increased transcriptional activity. Deubiquitinated by USP7; deubiquitination is induced by oxidative stress; enhances its interaction with USP7 and consequently, deubiquitination; increases its translocation to the cytoplasm and inhibits its transcriptional activity. Hydrogene-peroxide-induced ubiquitination and USP7-mediated deubiquitination have no major effect on its protein stability. As to expression, heart, brain, placenta, lung, liver, skeletal muscle, kidney and pancreas. Isoform zeta is most abundant in the liver, kidney, and pancreas.

It localises to the cytoplasm. The protein localises to the nucleus. Functionally, transcription factor involved in the regulation of the insulin signaling pathway. Binds to insulin-response elements (IREs) and can activate transcription of IGFBP1. Down-regulates expression of HIF1A and suppresses hypoxia-induced transcriptional activation of HIF1A-modulated genes. Also involved in negative regulation of the cell cycle. Involved in increased proteasome activity in embryonic stem cells (ESCs) by activating expression of PSMD11 in ESCs, leading to enhanced assembly of the 26S proteasome, followed by higher proteasome activity. This Homo sapiens (Human) protein is Forkhead box protein O4 (FOXO4).